A 70-amino-acid polypeptide reads, in one-letter code: Kunitz-type serine protease inhibitor BmKTT-3 (70 aa).

The BPTI/Kunitz inhibitor domain maps to 7-57 (CRLPPERGPCRGNITKYYYHNESRTCRTFSYGGCEGNSNNFRNRHYCMKYC). Disulfide bonds link Cys-7-Cys-57, Cys-16-Cys-40, and Cys-32-Cys-53.

Belongs to the venom Kunitz-type family. Scorpion delta-Ktx subfamily. Delta-Ktx 1 sub-subfamily. In terms of tissue distribution, expressed by the venom gland.

It is found in the secreted. Serine protease inhibitor that inhibits 85% of the activity of trypsin at a molar ratio of 4:1 (Ki=760 nM). This is Kunitz-type serine protease inhibitor BmKTT-3 from Olivierus martensii (Manchurian scorpion).